A 501-amino-acid polypeptide reads, in one-letter code: Dipeptide and tripeptide permease A (501 aa).

Topologically, residues 1 to 21 are cytoplasmic; that stretch reads MSTANNKPAESVSLNAFKQPR. A helical transmembrane segment spans residues 22–44; it reads AFYLIFSIELWERFGYYGLQGIM. Residues 45–59 are Periplasmic-facing; that stretch reads AVYLVKQLGMSEADS. Residues 60 to 80 traverse the membrane as a helical segment; that stretch reads ITLFSSFSALVYGLVAIGGWL. Topologically, residues 81–89 are cytoplasmic; it reads GDKVLGTKR. The helical transmembrane segment at 90–110 threads the bilayer; sequence VIMLGAIVLAIGYALVAWSGH. Position 111 (D111) is a topological domain, periplasmic. The helical transmembrane segment at 112–132 threads the bilayer; it reads AAIVYMGMATIAVGNGLFKAN. Residues 133 to 153 are Cytoplasmic-facing; that stretch reads PSSLLSTCYDKNDPRLDGAFT. A helical transmembrane segment spans residues 154–174; sequence MYYMSINIGSFFSMLATPWLA. Topologically, residues 175-178 are periplasmic; sequence ARFG. Residues 179–199 traverse the membrane as a helical segment; it reads WSVAFALSVVGMVITIINFAF. Residues 200 to 218 lie on the Cytoplasmic side of the membrane; that stretch reads CQKWVKQYGSKPDFAPVHM. The chain crosses the membrane as a helical span at residues 219–239; the sequence is GKLLATIAGVVVLVAIATWLL. The Periplasmic portion of the chain corresponds to 240 to 246; the sequence is HNQGIAR. The helical transmembrane segment at 247 to 267 threads the bilayer; that stretch reads MVLGVVALGIVVIFAKETIGL. Residues 268–274 lie on the Cytoplasmic side of the membrane; sequence KGAARRK. Residues 275-295 form a helical membrane-spanning segment; sequence MIVAFLLMVEAIVFFVLYSQM. The Periplasmic segment spans residues 296–320; it reads PTSLNFFAIRNVEHSILGIAFEPEQ. Residues 321 to 341 traverse the membrane as a helical segment; the sequence is YQALNPFWIMIGSPILAAIYN. The Cytoplasmic portion of the chain corresponds to 342–352; sequence KMGDRLPMPHK. A helical transmembrane segment spans residues 353-373; it reads FAIGMVLCSGAFLVLPLGAKF. Residues 374–383 are Periplasmic-facing; it reads ASDAGIVSVN. A helical membrane pass occupies residues 384–404; it reads WLILSYALQSIGELMISGLGL. Residues 405–414 lie on the Cytoplasmic side of the membrane; that stretch reads AMVAQLVPQR. Residues 415 to 435 traverse the membrane as a helical segment; the sequence is LMGFIMGSWFLTTAGAAIIAG. Over 436–459 the chain is Periplasmic; sequence KIANLMAVPENVTDPLVSLEVYGH. The chain crosses the membrane as a helical span at residues 460–480; it reads VFLQIGIVTAVIAALMLLTAP. The Cytoplasmic segment spans residues 481 to 501; sequence KLNRMTQDDSADLKARETAAA.

It belongs to the major facilitator superfamily. Proton-dependent oligopeptide transporter (POT/PTR) (TC 2.A.17) family. DtpA subfamily.

Its subcellular location is the cell inner membrane. Proton-dependent permease that transports di- and tripeptides. This chain is Dipeptide and tripeptide permease A, found in Klebsiella pneumoniae (strain 342).